The sequence spans 274 residues: Ribonucleoside-diphosphate reductase small chain (274 aa).

Positions 70, 101, and 104 each coordinate Fe cation. Tyr-108 is an active-site residue. Fe cation is bound by residues Glu-163, Glu-197, and His-200.

The protein belongs to the ribonucleoside diphosphate reductase small chain family. As to quaternary structure, heterodimer of a large and a small chain. It depends on Fe cation as a cofactor.

It catalyses the reaction a 2'-deoxyribonucleoside 5'-diphosphate + [thioredoxin]-disulfide + H2O = a ribonucleoside 5'-diphosphate + [thioredoxin]-dithiol. Ribonucleoside-diphosphate reductase holoenzyme provides the precursors necessary for viral DNA synthesis. Allows virus growth in non-dividing cells. Catalyzes the biosynthesis of deoxyribonucleotides from the corresponding ribonucleotides. The protein is Ribonucleoside-diphosphate reductase small chain of Sus scrofa (Pig).